We begin with the raw amino-acid sequence, 1347 residues long: Probable serine/threonine-protein kinase DDB_G0288147 (1347 aa).

The Phorbol-ester/DAG-type zinc-finger motif lies at 12–67; it reads NHRFEPYTLKHLTICKRCEKEIIGVSNSAQICYSCKNIYHTRCCKEIETKKLELIC. Disordered regions lie at residues 262 to 316, 333 to 402, and 463 to 485; these read PFNE…LNES, SNNS…KSSK, and DNNN…NNNN. Residues 271–282 are compositionally biased toward polar residues; that stretch reads DSTLSASTYNRR. 3 stretches are compositionally biased toward low complexity: residues 286–316, 333–342, and 350–361; these read KNKN…LNES, SNNSNNLAAL, and TTTTTTTTTTTT. Composition is skewed to basic residues over residues 366–382 and 389–402; these read NNHH…KSRK and NKKK…KSSK. Residues 464–485 are compositionally biased toward low complexity; that stretch reads NNNNNNNNNNNNNNNSNNNNNN. The region spanning 599 to 854 is the Protein kinase domain; sequence VKINVEIYDS…EILKVFYSLL (256 aa). ATP is bound by residues 605-613 and lysine 626; that span reads IYDSPLCTV. The Proton acceptor role is filled by aspartate 724. 2 disordered regions span residues 937–1241 and 1282–1310; these read SERK…IVNP and SSDS…IRSP. Acidic residues predominate over residues 976-986; sequence IIDDDDDDDDD. 2 stretches are compositionally biased toward low complexity: residues 1004–1015 and 1024–1062; these read NINSENKNNNNV and SSNS…NNNN. 2 stretches are compositionally biased toward polar residues: residues 1063 to 1083 and 1118 to 1127; these read LRQN…NQLM and LSSSQTSEIG. Composition is skewed to low complexity over residues 1128 to 1241 and 1282 to 1291; these read DNNT…IVNP and SSDSSNSLSD.

It belongs to the protein kinase superfamily. TKL Ser/Thr protein kinase family.

It carries out the reaction L-seryl-[protein] + ATP = O-phospho-L-seryl-[protein] + ADP + H(+). The enzyme catalyses L-threonyl-[protein] + ATP = O-phospho-L-threonyl-[protein] + ADP + H(+). The chain is Probable serine/threonine-protein kinase DDB_G0288147 from Dictyostelium discoideum (Social amoeba).